The primary structure comprises 250 residues: DNA repair protein RecO (250 aa).

The protein belongs to the RecO family.

Functionally, involved in DNA repair and RecF pathway recombination. The sequence is that of DNA repair protein RecO from Staphylococcus aureus (strain MRSA252).